Consider the following 648-residue polypeptide: MSTETWNLFVAWAQLLLLFRISPQYVNAKPCPSVCRCDGGFIYCNDRDLTSIPSGIPDDATTLYLQNNQINNAGIPSDLRGLDKVERIYLYRNSLDEFPINLPKNVKELHLQENNIRTITYDALSQIPSIEELHLDDNSVSAVSIEDGAFRDNIFLRLLFLSRNHLSTIPWGLPRTIEELRLDDNRISTIAEISLQDLTNLKRLVLDGNLLNNNGLGERVFMNLINLTELSLVRNSLTSPPANLPGTNLRKLYLQENHMNYVPPNAFADLTQLYRLDMSNNNITALPQGIFDDLDNLTQLFLRNNPWYCGCKMKWVRDWLQSLPSKVNVRGLMCQAPERVRGMTIKDLNKELFDCKDRIGSNTIHVTTTVLNSLLPAQGQWPVPVTKQPEIRPPDINKIFRTTPIPVKKIITIQVKSITTETIYISWKVALPMTALRLSWQLGHSPVFGSITETIVTGDRTEYLLTALEPESPYRICMVPMETGNIYLSDETPVCIETETAPLKMYNPTTTLNREQEKEPYKNSSLPLAAIIGGAVALVAITLLALVCWYVHRNGSLFSRNCAYSKGRRRKDDYAEAGTKKDNSILEIRETSFPMIPINSDPISKEEFIIHTIFPPNGVSLYKNSHSESSSNRSYRDSGIPDSDHSHS.

Residues 1–28 (MSTETWNLFVAWAQLLLLFRISPQYVNA) form the signal peptide. At 29–527 (KPCPSVCRCD…KEPYKNSSLP (499 aa)) the chain is on the extracellular side. Positions 30–62 (PCPSVCRCDGGFIYCNDRDLTSIPSGIPDDATT) constitute an LRRNT domain. Cystine bridges form between cysteine 31/cysteine 37 and cysteine 35/cysteine 44. LRR repeat units lie at residues 58–82 (DDAT…LRGL), 83–105 (DKVE…LPKN), 107–126 (KELH…ALSQ), 127–152 (IPSI…AFRD), 154–179 (IFLR…TIEE), 181–197 (RLDD…SLQD), 198–223 (LTNL…VFMN), 225–246 (INLT…NLPG), 247–269 (TNLR…AFAD), and 270–293 (LTQL…IFDD). Asparagine 226 is a glycosylation site (N-linked (GlcNAc...) asparagine). Positions 305-356 (NPWYCGCKMKWVRDWLQSLPSKVNVRGLMCQAPERVRGMTIKDLNKELFDCK) constitute an LRRCT domain. An intrachain disulfide couples cysteine 309 to cysteine 334. Residues 409–503 (KIITIQVKSI…VCIETETAPL (95 aa)) form the Fibronectin type-III domain. A helical membrane pass occupies residues 528–548 (LAAIIGGAVALVAITLLALVC). Over 549–648 (WYVHRNGSLF…GIPDSDHSHS (100 aa)) the chain is Cytoplasmic. Residues 624-633 (NSHSESSSNR) are compositionally biased toward low complexity. Positions 624 to 648 (NSHSESSSNRSYRDSGIPDSDHSHS) are disordered.

As to quaternary structure, interacts with fgfr1 and fgfr4. Interacts with rnd1, cdh1 and pcdh8. Interacts (via extracellular domain) with unc5b and unc5d (via extracellular domain). Post-translationally, N-glycosylated. In terms of processing, proteolytic cleavage in the juxtamembrane region gives rise to a soluble ectodomain. Cleavage is probably effected by a metalloprotease.

The protein localises to the cell membrane. The protein resides in the endoplasmic reticulum membrane. Its subcellular location is the cell junction. It is found in the focal adhesion. It localises to the secreted. The protein localises to the cell projection. The protein resides in the axon. Its subcellular location is the growth cone membrane. In terms of biological role, functions in cell-cell adhesion, cell migration and axon guidance, exerting an attractive or repulsive role depending on its interaction partners. Modulates cadherin-dependent cell-cell adhesion and cell sorting. Plays a role in the spatial organization of brain neurons. Plays a role in vascular development. Plays a role in cell-cell adhesion via its interaction with latrophilins that are expressed at the surface of adjacent cells. Mediates axon attraction towards cells expressing ntn1. mediates axon growth cone collapse and plays a repulsive role in neuron guidance via its interaction with unc-5 family members. Plays a role in the regulation of the density of glutamaergic synapses. Plays a role in signaling cascades downstream of fgfr1, and possibly also other fgfr family members. Plays a role in embryonic morphogenesis, but not in embryonic patterning. In Xenopus tropicalis (Western clawed frog), this protein is Leucine-rich repeat transmembrane protein FLRT3.